Consider the following 319-residue polypeptide: Probable deoxyhypusine synthase (319 aa).

Catalysis depends on Lys-287, which acts as the Nucleophile.

Belongs to the deoxyhypusine synthase family. The cofactor is NAD(+).

The enzyme catalyses [eIF5A protein]-L-lysine + spermidine = [eIF5A protein]-deoxyhypusine + propane-1,3-diamine. The protein operates within protein modification; eIF5A hypusination. In terms of biological role, catalyzes the NAD-dependent oxidative cleavage of spermidine and the subsequent transfer of the butylamine moiety of spermidine to the epsilon-amino group of a specific lysine residue of the eIF-5A precursor protein to form the intermediate deoxyhypusine residue. The chain is Probable deoxyhypusine synthase from Ignicoccus hospitalis (strain KIN4/I / DSM 18386 / JCM 14125).